Reading from the N-terminus, the 301-residue chain is Homoserine O-acetyltransferase (301 aa).

The active-site Acyl-thioester intermediate is the Cys142. Substrate-binding residues include Lys163 and Ser192. Residue His235 is the Proton acceptor of the active site. Glu237 is an active-site residue. Residue Arg249 participates in substrate binding.

Belongs to the MetA family.

It is found in the cytoplasm. The enzyme catalyses L-homoserine + acetyl-CoA = O-acetyl-L-homoserine + CoA. It functions in the pathway amino-acid biosynthesis; L-methionine biosynthesis via de novo pathway; O-acetyl-L-homoserine from L-homoserine: step 1/1. Its function is as follows. Transfers an acetyl group from acetyl-CoA to L-homoserine, forming acetyl-L-homoserine. This Clostridium acetobutylicum (strain ATCC 824 / DSM 792 / JCM 1419 / IAM 19013 / LMG 5710 / NBRC 13948 / NRRL B-527 / VKM B-1787 / 2291 / W) protein is Homoserine O-acetyltransferase.